The chain runs to 203 residues: Holliday junction branch migration complex subunit RuvA (203 aa).

Positions 1–63 (MIFSVRGEVL…EDSMTLYGFS (63 aa)) are domain I. Residues 64 to 141 (DAENRDLFLA…GPVGASGLTV (78 aa)) form a domain II region. The segment at 141–145 (VGTAA) is flexible linker. The tract at residues 146–203 (DGNAVRGSVVEALVGLGFAAKQAEEATDQVLDGELGKDGAVATSSALRAALSLLGKTR) is domain III.

It belongs to the RuvA family. As to quaternary structure, homotetramer. Forms an RuvA(8)-RuvB(12)-Holliday junction (HJ) complex. HJ DNA is sandwiched between 2 RuvA tetramers; dsDNA enters through RuvA and exits via RuvB. An RuvB hexamer assembles on each DNA strand where it exits the tetramer. Each RuvB hexamer is contacted by two RuvA subunits (via domain III) on 2 adjacent RuvB subunits; this complex drives branch migration. In the full resolvosome a probable DNA-RuvA(4)-RuvB(12)-RuvC(2) complex forms which resolves the HJ.

The protein localises to the cytoplasm. Functionally, the RuvA-RuvB-RuvC complex processes Holliday junction (HJ) DNA during genetic recombination and DNA repair, while the RuvA-RuvB complex plays an important role in the rescue of blocked DNA replication forks via replication fork reversal (RFR). RuvA specifically binds to HJ cruciform DNA, conferring on it an open structure. The RuvB hexamer acts as an ATP-dependent pump, pulling dsDNA into and through the RuvAB complex. HJ branch migration allows RuvC to scan DNA until it finds its consensus sequence, where it cleaves and resolves the cruciform DNA. The polypeptide is Holliday junction branch migration complex subunit RuvA (Mycobacterium leprae (strain Br4923)).